We begin with the raw amino-acid sequence, 130 residues long: Large ribosomal subunit protein bL12 (130 aa).

It belongs to the bacterial ribosomal protein bL12 family. Homodimer. Part of the ribosomal stalk of the 50S ribosomal subunit. Forms a multimeric L10(L12)X complex, where L10 forms an elongated spine to which 2 to 4 L12 dimers bind in a sequential fashion. Binds GTP-bound translation factors.

In terms of biological role, forms part of the ribosomal stalk which helps the ribosome interact with GTP-bound translation factors. Is thus essential for accurate translation. The chain is Large ribosomal subunit protein bL12 from Yersinia pestis bv. Antiqua (strain Angola).